We begin with the raw amino-acid sequence, 360 residues long: Peptide chain release factor 1 (360 aa).

Gln-235 carries the post-translational modification N5-methylglutamine. Residues 284-293 show a composition bias toward basic and acidic residues; it reads QKRQQEEAST. Residues 284-305 form a disordered region; it reads QKRQQEEASTRRNLLGSGDRSD.

This sequence belongs to the prokaryotic/mitochondrial release factor family. Methylated by PrmC. Methylation increases the termination efficiency of RF1.

It localises to the cytoplasm. Its function is as follows. Peptide chain release factor 1 directs the termination of translation in response to the peptide chain termination codons UAG and UAA. The polypeptide is Peptide chain release factor 1 (Pectobacterium carotovorum subsp. carotovorum (strain PC1)).